We begin with the raw amino-acid sequence, 472 residues long: 2-oxoglutarate carboxylase small subunit (472 aa).

The 445-residue stretch at 1 to 445 (MFKKVLVANR…TTRYLEEHPH (445 aa)) folds into the Biotin carboxylation domain. Positions 115 and 199 each coordinate ATP. In terms of domain architecture, ATP-grasp spans 119 to 316 (KEVMKRAGVP…IVKWQIRIAA (198 aa)). The active site involves Arg291.

As to quaternary structure, heterohexadecamer of 8 large subunits and 8 small subunits. Requires Mg(2+) as cofactor. Mn(2+) is required as a cofactor. The cofactor is Co(2+).

It catalyses the reaction hydrogencarbonate + 2-oxoglutarate + ATP = (S)-oxalosuccinate + ADP + phosphate + H(+). The protein is 2-oxoglutarate carboxylase small subunit of Hydrogenobacter thermophilus (strain DSM 6534 / IAM 12695 / TK-6).